Consider the following 363-residue polypeptide: Probable iron/ascorbate oxidoreductase DDB_G0283291 (363 aa).

Positions 197–306 constitute a Fe2OG dioxygenase domain; sequence IFNYPSIISS…RISFPLFFDP (110 aa). The Fe cation site is built by His-230, Asp-232, and His-286. A 2-oxoglutarate-binding site is contributed by Arg-297.

The protein belongs to the iron/ascorbate-dependent oxidoreductase family. Fe(2+) is required as a cofactor.

This is Probable iron/ascorbate oxidoreductase DDB_G0283291 from Dictyostelium discoideum (Social amoeba).